We begin with the raw amino-acid sequence, 175 residues long: MANLKSLPVGDKAPEVVHMVIEVPRGSGNKYEYDPDLGAIKLDRVLPGAQFYPGDYGFIPSTLAEDGDPLDGLVLSTYPLLPGVVVEVRVVGLLLMEDEKGGDAKVIGVVAEDQRLDHIQDIGDVPEGVKQEIQHFFETYKALEAKKGKWVKVTGWRDRKAALEEVRACIARYKG.

Residues K30, R44, and Y56 each contribute to the substrate site. Mg(2+)-binding residues include D66, D71, and D103. Y140 serves as a coordination point for substrate.

Belongs to the PPase family. Homohexamer. Mg(2+) serves as cofactor.

The protein resides in the cytoplasm. It catalyses the reaction diphosphate + H2O = 2 phosphate + H(+). Functionally, catalyzes the hydrolysis of inorganic pyrophosphate (PPi) forming two phosphate ions. The chain is Inorganic pyrophosphatase from Thermus thermophilus (strain ATCC 27634 / DSM 579 / HB8).